A 476-amino-acid chain; its full sequence is Protein transport protein Sec61 subunit alpha (476 aa).

The Cytoplasmic segment spans residues Gly2–Leu33. Residues Trp34–Ile53 traverse the membrane as a helical segment. Residues Met54–Leu76 are Lumenal-facing. The helical transmembrane segment at Met77–Gly96 threads the bilayer. The Cytoplasmic portion of the chain corresponds to Ala97–Lys117. A helical transmembrane segment spans residues Leu118–Gly138. Topologically, residues Asp139–Gly144 are lumenal. The chain crosses the membrane as a helical span at residues Ala145–Leu165. Residues Asp166 to Gly172 are Cytoplasmic-facing. A helical membrane pass occupies residues Tyr173–Trp193. Topologically, residues Lys194–Pro240 are lumenal. The chain crosses the membrane as a helical span at residues Asn241 to Phe261. Residues Arg262 to Asn288 are Cytoplasmic-facing. A helical transmembrane segment spans residues Ile289 to Ser309. The Lumenal portion of the chain corresponds to Thr310 to Val354. A helical membrane pass occupies residues Leu355–Phe375. Topologically, residues Ser376–Ala420 are cytoplasmic. A helical transmembrane segment spans residues Ala421–Ile441. Topologically, residues Gly442 to Thr445 are lumenal. A helical transmembrane segment spans residues Gly446–Val462. At Lys463–Phe476 the chain is on the cytoplasmic side.

The protein belongs to the SecY/SEC61-alpha family. As to quaternary structure, the SEC61 channel-forming translocon complex consists of channel-forming core components SEC61A1, SEC61B and SEC61G and different auxiliary components such as SEC62 and SEC63. The SEC61 channel associates with the multi-pass translocon (MPT) complex.

The protein localises to the endoplasmic reticulum membrane. Its function is as follows. Component of SEC61 channel-forming translocon complex that mediates transport of signal peptide-containing precursor polypeptides across the endoplasmic reticulum (ER). Forms a ribosome receptor and a gated pore in the ER membrane, both functions required for cotranslational translocation of nascent polypeptides. May cooperate with auxiliary protein SEC62, SEC63 and HSPA5/BiP to enable post-translational transport of small presecretory proteins. The SEC61 channel is also involved in ER membrane insertion of transmembrane proteins: it mediates membrane insertion of the first few transmembrane segments of proteins, while insertion of subsequent transmembrane regions of multi-pass membrane proteins is mediated by the multi-pass translocon (MPT) complex. This is Protein transport protein Sec61 subunit alpha (sec61a) from Hemitripterus americanus (Sea raven).